The primary structure comprises 828 residues: Periplasmic nitrate reductase (828 aa).

The tat-type signal signal peptide spans 1 to 31 (MKLSRRSFMKANAVAAAAAAAGLSVPGVARA). A 4Fe-4S Mo/W bis-MGD-type domain is found at 39-95 (IKWDKAPCRFCGTGCGVLVGTQQGRVVACQGDPDAPVNRGLNCIKGYFLPKIMYGKD). The [4Fe-4S] cluster site is built by Cys46, Cys49, Cys53, and Cys81. Mo-bis(molybdopterin guanine dinucleotide) is bound by residues Lys83, Gln150, Asn175, Cys179, 212–219 (WGANMAEM), 243–247 (STYQH), 262–264 (QSD), Met372, Gln376, Asn482, 508–509 (SD), Lys531, Asp558, and 718–727 (TGRVLEHWHT). Phe794 is a substrate binding site. Mo-bis(molybdopterin guanine dinucleotide) is bound by residues Asn802 and Lys819.

Belongs to the prokaryotic molybdopterin-containing oxidoreductase family. NasA/NapA/NarB subfamily. Component of the periplasmic nitrate reductase NapAB complex composed of NapA and NapB. It depends on [4Fe-4S] cluster as a cofactor. Requires Mo-bis(molybdopterin guanine dinucleotide) as cofactor. In terms of processing, predicted to be exported by the Tat system. The position of the signal peptide cleavage has not been experimentally proven.

Its subcellular location is the periplasm. It carries out the reaction 2 Fe(II)-[cytochrome] + nitrate + 2 H(+) = 2 Fe(III)-[cytochrome] + nitrite + H2O. In terms of biological role, catalytic subunit of the periplasmic nitrate reductase complex NapAB. Receives electrons from NapB and catalyzes the reduction of nitrate to nitrite. This chain is Periplasmic nitrate reductase, found in Escherichia coli O9:H4 (strain HS).